A 303-amino-acid polypeptide reads, in one-letter code: Proteasome subunit beta (303 aa).

The propeptide at 1–64 is removed in mature form; by autocatalysis; that stretch reads MTWPDRDTSA…VTPSDAVPHG (64 aa). The active-site Nucleophile is the Thr65.

It belongs to the peptidase T1B family. The 20S proteasome core is composed of 14 alpha and 14 beta subunits that assemble into four stacked heptameric rings, resulting in a barrel-shaped structure. The two inner rings, each composed of seven catalytic beta subunits, are sandwiched by two outer rings, each composed of seven alpha subunits. The catalytic chamber with the active sites is on the inside of the barrel. Has a gated structure, the ends of the cylinder being occluded by the N-termini of the alpha-subunits. Is capped by the proteasome-associated ATPase, ARC.

It localises to the cytoplasm. It carries out the reaction Cleavage of peptide bonds with very broad specificity.. It functions in the pathway protein degradation; proteasomal Pup-dependent pathway. With respect to regulation, the formation of the proteasomal ATPase ARC-20S proteasome complex, likely via the docking of the C-termini of ARC into the intersubunit pockets in the alpha-rings, may trigger opening of the gate for substrate entry. Interconversion between the open-gate and close-gate conformations leads to a dynamic regulation of the 20S proteasome proteolysis activity. Its function is as follows. Component of the proteasome core, a large protease complex with broad specificity involved in protein degradation. The sequence is that of Proteasome subunit beta from Mycolicibacterium gilvum (strain PYR-GCK) (Mycobacterium gilvum (strain PYR-GCK)).